The chain runs to 200 residues: Small ribosomal subunit protein uS4 (200 aa).

Positions 92–155 (SRLDAVVYQL…QKLNIIAESV (64 aa)) constitute an S4 RNA-binding domain.

This sequence belongs to the universal ribosomal protein uS4 family. Part of the 30S ribosomal subunit. Contacts protein S5. The interaction surface between S4 and S5 is involved in control of translational fidelity.

One of the primary rRNA binding proteins, it binds directly to 16S rRNA where it nucleates assembly of the body of the 30S subunit. Functionally, with S5 and S12 plays an important role in translational accuracy. This chain is Small ribosomal subunit protein uS4, found in Macrococcus caseolyticus (strain JCSC5402) (Macrococcoides caseolyticum).